A 210-amino-acid polypeptide reads, in one-letter code: Ribosomal RNA large subunit methyltransferase E (210 aa).

5 residues coordinate S-adenosyl-L-methionine: Gly-67, Trp-69, Asp-87, Asp-103, and Asp-128. The active-site Proton acceptor is the Lys-168.

Belongs to the class I-like SAM-binding methyltransferase superfamily. RNA methyltransferase RlmE family.

It is found in the cytoplasm. The catalysed reaction is uridine(2552) in 23S rRNA + S-adenosyl-L-methionine = 2'-O-methyluridine(2552) in 23S rRNA + S-adenosyl-L-homocysteine + H(+). In terms of biological role, specifically methylates the uridine in position 2552 of 23S rRNA at the 2'-O position of the ribose in the fully assembled 50S ribosomal subunit. The polypeptide is Ribosomal RNA large subunit methyltransferase E (Psychrobacter sp. (strain PRwf-1)).